The primary structure comprises 298 residues: Homoserine kinase (298 aa).

92–102 (PLARGLGSSAT) lines the ATP pocket.

This sequence belongs to the GHMP kinase family. Homoserine kinase subfamily.

The protein resides in the cytoplasm. The enzyme catalyses L-homoserine + ATP = O-phospho-L-homoserine + ADP + H(+). It functions in the pathway amino-acid biosynthesis; L-threonine biosynthesis; L-threonine from L-aspartate: step 4/5. In terms of biological role, catalyzes the ATP-dependent phosphorylation of L-homoserine to L-homoserine phosphate. The polypeptide is Homoserine kinase (thrB) (Nostoc sp. (strain PCC 7120 / SAG 25.82 / UTEX 2576)).